A 544-amino-acid polypeptide reads, in one-letter code: Chaperonin GroEL (544 aa).

ATP-binding positions include Thr-29–Pro-32, Lys-50, Asp-86–Thr-90, Gly-413, Asp-479–Ala-481, and Asp-495.

Belongs to the chaperonin (HSP60) family. As to quaternary structure, forms a cylinder of 14 subunits composed of two heptameric rings stacked back-to-back. Interacts with the co-chaperonin GroES.

The protein localises to the cytoplasm. It catalyses the reaction ATP + H2O + a folded polypeptide = ADP + phosphate + an unfolded polypeptide.. Functionally, together with its co-chaperonin GroES, plays an essential role in assisting protein folding. The GroEL-GroES system forms a nano-cage that allows encapsulation of the non-native substrate proteins and provides a physical environment optimized to promote and accelerate protein folding. The sequence is that of Chaperonin GroEL from Borrelia turicatae (strain 91E135).